Consider the following 73-residue polypeptide: Protein SlyX homolog (73 aa).

The interval 54–73 (LQQAESNAPAAPANERPPHY) is disordered. Residues 57–67 (AESNAPAAPAN) show a composition bias toward low complexity.

This sequence belongs to the SlyX family.

The sequence is that of Protein SlyX homolog from Rhodopseudomonas palustris (strain BisA53).